A 129-amino-acid polypeptide reads, in one-letter code: Fluoride-specific ion channel FluC (129 aa).

4 consecutive transmembrane segments (helical) span residues I8–W28, A34–I54, I70–H90, and A102–I122. G78 and T81 together coordinate Na(+).

Belongs to the fluoride channel Fluc/FEX (TC 1.A.43) family.

It localises to the cell inner membrane. It carries out the reaction fluoride(in) = fluoride(out). Na(+) is not transported, but it plays an essential structural role and its presence is essential for fluoride channel function. Fluoride-specific ion channel. Important for reducing fluoride concentration in the cell, thus reducing its toxicity. In Chlorobium chlorochromatii (strain CaD3), this protein is Fluoride-specific ion channel FluC.